A 119-amino-acid polypeptide reads, in one-letter code: Holo-[acyl-carrier-protein] synthase (119 aa).

Mg(2+) is bound by residues Asp-7 and Glu-56.

Belongs to the P-Pant transferase superfamily. AcpS family. Mg(2+) is required as a cofactor.

It localises to the cytoplasm. The enzyme catalyses apo-[ACP] + CoA = holo-[ACP] + adenosine 3',5'-bisphosphate + H(+). In terms of biological role, transfers the 4'-phosphopantetheine moiety from coenzyme A to a Ser of acyl-carrier-protein. This chain is Holo-[acyl-carrier-protein] synthase, found in Chlamydia trachomatis serovar D (strain ATCC VR-885 / DSM 19411 / UW-3/Cx).